A 294-amino-acid chain; its full sequence is MEIRRRPPNPKVRVAHLEYAVPHDDEAPRHILEEIVWEKDREVAQARERVPLEKLKSQVAALPAPRDFVAALKASCRKPAVIAEVKKASPSKGVIREDFDPEAIAKAYAEGGASCLSVLTDKRFFQGGFEVLVQVRQVVDLPLLCKEFILSPYQLYQARAAGADAVLLIAAILTDQDISYLLKVARSLGLQVLLEVHDAAELERALGFEGVQLIGINNRDLTSFDTDLATTETLTATYGEQLRQSGALLVSESGLFSRDDLDRVQSAGADAVLVGEALMRQSDVQQALETLISG.

It belongs to the TrpC family.

It carries out the reaction 1-(2-carboxyphenylamino)-1-deoxy-D-ribulose 5-phosphate + H(+) = (1S,2R)-1-C-(indol-3-yl)glycerol 3-phosphate + CO2 + H2O. It participates in amino-acid biosynthesis; L-tryptophan biosynthesis; L-tryptophan from chorismate: step 4/5. The sequence is that of Indole-3-glycerol phosphate synthase from Synechococcus sp. (strain RCC307).